The following is a 20-amino-acid chain: Pregnancy-associated glycoprotein 71D (20 aa).

Asparagine 4 carries an N-linked (GlcNAc...) asparagine glycan.

The protein belongs to the peptidase A1 family. Chorionic epithelium (trophectoderm) and placental cotyledons.

The protein resides in the secreted. The protein localises to the extracellular space. This is Pregnancy-associated glycoprotein 71D from Bison bonasus (European bison).